Reading from the N-terminus, the 199-residue chain is MEQQEIIHISISEAAQAHFRCLLEQQEPNTHIRIFVVNPGTPSAECGVSYCPSNAVEETDTEFKFTGFSAFVDELSLPFLADAEIDYVTDQMGAQLTLKAPNSKMRKIADDAPFIERLDYVIQTQVNPQLASHGGQVTLIEVTEDKYAILQFGGGCNGCSMVDVTLKEGIEKQLLATFPTELKGVKDVTEHQRGEHSYY.

Residues Cys-156 and Cys-159 each coordinate [4Fe-4S] cluster.

It belongs to the NfuA family. In terms of assembly, homodimer. It depends on [4Fe-4S] cluster as a cofactor.

Its function is as follows. Involved in iron-sulfur cluster biogenesis. Binds a 4Fe-4S cluster, can transfer this cluster to apoproteins, and thereby intervenes in the maturation of Fe/S proteins. Could also act as a scaffold/chaperone for damaged Fe/S proteins. This chain is Fe/S biogenesis protein NfuA, found in Haemophilus ducreyi (strain 35000HP / ATCC 700724).